A 200-amino-acid polypeptide reads, in one-letter code: Glycerol-3-phosphate acyltransferase (200 aa).

Helical transmembrane passes span 2–22, 51–71, 84–104, 114–134, and 159–179; these read FNIPAVAVSYLIGSLSFAVIV, KAAVLTLLGDAAKGLVAVLLA, AIAAVALAALVGHMWPVFFGF, LGVLLALSPATALVCALIWLV, and FFMPHLSWIWATLLIALLVLF.

Belongs to the PlsY family. As to quaternary structure, probably interacts with PlsX.

Its subcellular location is the cell inner membrane. The catalysed reaction is an acyl phosphate + sn-glycerol 3-phosphate = a 1-acyl-sn-glycero-3-phosphate + phosphate. The protein operates within lipid metabolism; phospholipid metabolism. Functionally, catalyzes the transfer of an acyl group from acyl-phosphate (acyl-PO(4)) to glycerol-3-phosphate (G3P) to form lysophosphatidic acid (LPA). This enzyme utilizes acyl-phosphate as fatty acyl donor, but not acyl-CoA or acyl-ACP. The protein is Glycerol-3-phosphate acyltransferase of Neisseria meningitidis serogroup C / serotype 2a (strain ATCC 700532 / DSM 15464 / FAM18).